A 300-amino-acid chain; its full sequence is Bis(5'-nucleosyl)-tetraphosphatase, symmetrical (300 aa).

It belongs to the Ap4A hydrolase family.

It carries out the reaction P(1),P(4)-bis(5'-adenosyl) tetraphosphate + H2O = 2 ADP + 2 H(+). Its function is as follows. Hydrolyzes diadenosine 5',5'''-P1,P4-tetraphosphate to yield ADP. The protein is Bis(5'-nucleosyl)-tetraphosphatase, symmetrical of Pseudomonas syringae pv. tomato (strain ATCC BAA-871 / DC3000).